Here is a 497-residue protein sequence, read N- to C-terminus: FAD-linked oxidoreductase fogF (497 aa).

The first 18 residues, Met1 to Ala18, serve as a signal peptide directing secretion. The FAD-binding PCMH-type domain maps to Asn59 to Leu229.

Belongs to the oxygen-dependent FAD-linked oxidoreductase family. FAD serves as cofactor.

Its pathway is secondary metabolite biosynthesis. In terms of biological role, FAD-linked oxidoreductase; part of the gene cluster that mediates the biosynthesis of flavoglaucin and congeners (including aspergin, dihydroauroglaucin and auroglaucin), prenylated salicylaldehyde derivatives carrying a saturated or an unsaturated C-7 side chain. The PKS fogA releases the carboxylic acid (8E,10E,12E)-3,5,7-trihydroxytetradeca-8,10,12-trienoic acid as its product, as well as derivatives with one and two double bonds. FogA is indeed able to reduce the initial triketide, thus being at least partially responsible for the differently saturated heptyl side chains of flavoglaucin congeners. The oxidoreductases fogB, fogC and fogD modify the nascent polyketide in fogA-bound form and, together, fogA, fogB, fogC and fogD are necessary for the formation of the aromatic core and the cyclized PKS products are released as salicyl alcohols. In particular, fogB is responsible for oxidation of a hydroxyl group or reduction of remaining double bond(s) at the C-7 residue whereas fogD is probably involved in the reductive release of the modified PKS products. The cytochrome P450 monooxygenase fogE is then responsible for the hydroxylation at C-3 of the benzene ring. The fogE products are substrates of the prenyltransferase fogH and the prenylated benzyl alcohols are subsequently oxidized by the fogF to produce the final aryl aldehydes flavoglaucin and congeners. The short-chain dehydrogenase fogG does not seem to be involved in the biosynthesis of the prenylated salicylaldehyde derivatives. This is FAD-linked oxidoreductase fogF from Aspergillus ruber (strain CBS 135680).